Consider the following 362-residue polypeptide: Phosphoserine aminotransferase (362 aa).

Residues Ser-9 and Arg-42 each coordinate L-glutamate. Pyridoxal 5'-phosphate contacts are provided by residues 76–77, Trp-102, Thr-153, Asp-174, and Gln-197; that span reads GR. At Lys-198 the chain carries N6-(pyridoxal phosphate)lysine. 239-240 contributes to the pyridoxal 5'-phosphate binding site; sequence NT.

The protein belongs to the class-V pyridoxal-phosphate-dependent aminotransferase family. SerC subfamily. As to quaternary structure, homodimer. It depends on pyridoxal 5'-phosphate as a cofactor.

Its subcellular location is the cytoplasm. The catalysed reaction is O-phospho-L-serine + 2-oxoglutarate = 3-phosphooxypyruvate + L-glutamate. It carries out the reaction 4-(phosphooxy)-L-threonine + 2-oxoglutarate = (R)-3-hydroxy-2-oxo-4-phosphooxybutanoate + L-glutamate. Its pathway is amino-acid biosynthesis; L-serine biosynthesis; L-serine from 3-phospho-D-glycerate: step 2/3. It participates in cofactor biosynthesis; pyridoxine 5'-phosphate biosynthesis; pyridoxine 5'-phosphate from D-erythrose 4-phosphate: step 3/5. Functionally, catalyzes the reversible conversion of 3-phosphohydroxypyruvate to phosphoserine and of 3-hydroxy-2-oxo-4-phosphonooxybutanoate to phosphohydroxythreonine. This chain is Phosphoserine aminotransferase, found in Shigella boydii serotype 4 (strain Sb227).